A 1234-amino-acid polypeptide reads, in one-letter code: DNA-directed RNA polymerase subunit beta (1234 aa).

Belongs to the RNA polymerase beta chain family. In terms of assembly, the RNAP catalytic core consists of 2 alpha, 1 beta, 1 beta' and 1 omega subunit. When a sigma factor is associated with the core the holoenzyme is formed, which can initiate transcription.

The enzyme catalyses RNA(n) + a ribonucleoside 5'-triphosphate = RNA(n+1) + diphosphate. Its function is as follows. DNA-dependent RNA polymerase catalyzes the transcription of DNA into RNA using the four ribonucleoside triphosphates as substrates. This is DNA-directed RNA polymerase subunit beta from Clostridium perfringens (strain SM101 / Type A).